A 234-amino-acid polypeptide reads, in one-letter code: Endonuclease V (234 aa).

Mg(2+)-binding residues include Asp-36 and Asp-104.

It belongs to the endonuclease V family. It depends on Mg(2+) as a cofactor.

The protein localises to the cytoplasm. It carries out the reaction Endonucleolytic cleavage at apurinic or apyrimidinic sites to products with a 5'-phosphate.. DNA repair enzyme involved in the repair of deaminated bases. Selectively cleaves double-stranded DNA at the second phosphodiester bond 3' to a deoxyinosine leaving behind the intact lesion on the nicked DNA. This chain is Endonuclease V, found in Yersinia enterocolitica serotype O:8 / biotype 1B (strain NCTC 13174 / 8081).